Consider the following 89-residue polypeptide: UPF0223 protein BcerKBAB4_3787 (89 aa).

This sequence belongs to the UPF0223 family.

The sequence is that of UPF0223 protein BcerKBAB4_3787 from Bacillus mycoides (strain KBAB4) (Bacillus weihenstephanensis).